The primary structure comprises 229 residues: 7-cyano-7-deazaguanine synthase (229 aa).

Position 7 to 17 (Leu-7 to Leu-17) interacts with ATP. Zn(2+)-binding residues include Cys-191, Cys-199, Cys-202, and Cys-205.

Belongs to the QueC family. The cofactor is Zn(2+).

It carries out the reaction 7-carboxy-7-deazaguanine + NH4(+) + ATP = 7-cyano-7-deazaguanine + ADP + phosphate + H2O + H(+). Its pathway is purine metabolism; 7-cyano-7-deazaguanine biosynthesis. Its function is as follows. Catalyzes the ATP-dependent conversion of 7-carboxy-7-deazaguanine (CDG) to 7-cyano-7-deazaguanine (preQ(0)). This Nostoc sp. (strain PCC 7120 / SAG 25.82 / UTEX 2576) protein is 7-cyano-7-deazaguanine synthase.